A 227-amino-acid chain; its full sequence is Large ribosomal subunit protein bL25 (227 aa).

It belongs to the bacterial ribosomal protein bL25 family. CTC subfamily. Part of the 50S ribosomal subunit; part of the 5S rRNA/L5/L18/L25 subcomplex. Contacts the 5S rRNA. Binds to the 5S rRNA independently of L5 and L18.

In terms of biological role, this is one of the proteins that binds to the 5S RNA in the ribosome where it forms part of the central protuberance. This is Large ribosomal subunit protein bL25 from Polaromonas sp. (strain JS666 / ATCC BAA-500).